The sequence spans 312 residues: Olfactory receptor 13J1 (312 aa).

Over 1–25 (MEPLNRTEVSEFFLKGFSGYPALEH) the chain is Extracellular. Asparagine 5 carries an N-linked (GlcNAc...) asparagine glycan. Residues 26–46 (LLFPLCSAMYLVTLLGNTAIM) form a helical membrane-spanning segment. Topologically, residues 47-54 (AVSVLDIH) are cytoplasmic. The chain crosses the membrane as a helical span at residues 55–75 (LHTPVYFFLGNLSTLDICYTP). Topologically, residues 76-99 (TFVPLMLVHLLSSRKTISFAVCAI) are extracellular. An intrachain disulfide couples cysteine 97 to cysteine 189. The helical transmembrane segment at 100 to 120 (QMCLSLSTGSTECLLLAITAY) threads the bilayer. The Cytoplasmic portion of the chain corresponds to 121–139 (DRYLAICQPLRYHVLMSHR). A helical membrane pass occupies residues 140–160 (LCVLLMGAAWVLCLLKSVTEM). Topologically, residues 161–197 (VISMRLPFCGHHVVSHFTCKILAVLKLACGNTSVSED) are extracellular. Asparagine 191 carries an N-linked (GlcNAc...) asparagine glycan. Residues 198–217 (FLLAGSILLLPVPLAFICLS) traverse the membrane as a helical segment. Residues 218 to 237 (YLLILATILRVPSAARCCKA) are Cytoplasmic-facing. A helical membrane pass occupies residues 238–258 (FSTCLAHLAVVLLFYGTIIFM). Topologically, residues 259-271 (YLKPKSKEAHISD) are extracellular. A helical transmembrane segment spans residues 272–292 (EVFTVLYAMVTTMLNPTIYSL). At 293–312 (RNKEVKEAARKVWGRSRASR) the chain is on the cytoplasmic side.

Belongs to the G-protein coupled receptor 1 family.

It localises to the cell membrane. Its function is as follows. Odorant receptor. This chain is Olfactory receptor 13J1 (OR13J1), found in Homo sapiens (Human).